Here is a 57-residue protein sequence, read N- to C-terminus: Small ribosomal subunit protein bS21 (57 aa).

Positions 22–57 are disordered; sequence QCSKSGVLSEAKKRKHYEKPSEKRKRKATEKRNSRK. The span at 33–57 shows a compositional bias: basic residues; the sequence is KKRKHYEKPSEKRKRKATEKRNSRK.

It belongs to the bacterial ribosomal protein bS21 family.

This is Small ribosomal subunit protein bS21 from Natranaerobius thermophilus (strain ATCC BAA-1301 / DSM 18059 / JW/NM-WN-LF).